The sequence spans 260 residues: Small ribosomal subunit protein eS1 (260 aa).

The segment covering 1 to 18 (MAVGKNKRISKGKKGGKK) has biased composition (basic residues). The interval 1–22 (MAVGKNKRISKGKKGGKKKAAD) is disordered.

Belongs to the eukaryotic ribosomal protein eS1 family. As to quaternary structure, component of the small ribosomal subunit. Mature ribosomes consist of a small (40S) and a large (60S) subunit. The 40S subunit contains about 33 different proteins and 1 molecule of RNA (18S). The 60S subunit contains about 49 different proteins and 3 molecules of RNA (25S, 5.8S and 5S).

The protein resides in the cytoplasm. This chain is Small ribosomal subunit protein eS1, found in Helianthus annuus (Common sunflower).